A 381-amino-acid polypeptide reads, in one-letter code: CCN family member 1 (381 aa).

An N-terminal signal peptide occupies residues 1-24 (MSSRIARALALVVTLLHLTRLALS). Positions 25-94 (TCPAACHCPL…TALKGICRAQ (70 aa)) constitute an IGFBP N-terminal domain. 6 cysteine pairs are disulfide-bonded: cysteine 26–cysteine 50, cysteine 30–cysteine 52, cysteine 32–cysteine 53, cysteine 39–cysteine 56, cysteine 64–cysteine 78, and cysteine 70–cysteine 91. The region spanning 98 to 164 (RPCEYNSRIY…GQCCEEWVCD (67 aa)) is the VWFC domain. Serine 188 is subject to Phosphoserine; by FAM20C. Positions 228-273 (KCIVQTTSWSQCSKTCGTGISTRVTNDNPECRLVKETRICEVRPCG) constitute a TSP type-1 domain. The interval 279 to 315 (SLKKGKKCSKTKKSPEPVRFTYAGCLSVKKYRPKYCG) is heparin-binding. 5 disulfides stabilise this stretch: cysteine 286–cysteine 323, cysteine 303–cysteine 337, cysteine 314–cysteine 353, cysteine 317–cysteine 355, and cysteine 322–cysteine 359. Residues 286–360 (CSKTKKSPEP…QSCKCNYNCP (75 aa)) enclose the CTCK domain.

It belongs to the CCN family. Interaction with integrins is heparin- and cell-type-dependent and promotes cell adhesion. In skin fibroblasts it binds ITGA6/ITGB1, in endothelial cells, binds ITGAV/ITGB3 and in platelets, ITGA2B/ITGB3. Binds, in vitro, ITGAV/ITGB5.

It is found in the secreted. Promotes cell proliferation, chemotaxis, angiogenesis and cell adhesion. Appears to play a role in wound healing by up-regulating, in skin fibroblasts, the expression of a number of genes involved in angiogenesis, inflammation and matrix remodeling including VEGA-A, VEGA-C, MMP1, MMP3, TIMP1, uPA, PAI-1 and integrins alpha-3 and alpha-5. CCN1-mediated gene regulation is dependent on heparin-binding. Down-regulates the expression of alpha-1 and alpha-2 subunits of collagen type-1. Promotes cell adhesion and adhesive signaling through integrin alpha-6/beta-1, cell migration through integrin alpha-v/beta-5 and cell proliferation through integrin alpha-v/beta-3. The chain is CCN family member 1 from Homo sapiens (Human).